A 432-amino-acid chain; its full sequence is Acyl-coenzyme A thioesterase 3 (432 aa).

Active-site charge relay system residues include serine 243, aspartate 337, and histidine 371. A Microbody targeting signal motif is present at residues 430–432 (AKL).

It belongs to the C/M/P thioester hydrolase family. Widely expressed. Highly expressed in the kidney, expressed at low level in the liver. Isoform 2 is expressed in the kidney, but not in the liver. Isoform 1 is liver-specific. Highly expressed in kidney (at protein level).

It is found in the peroxisome. The enzyme catalyses hexadecanoyl-CoA + H2O = hexadecanoate + CoA + H(+). It carries out the reaction decanoyl-CoA + H2O = decanoate + CoA + H(+). It catalyses the reaction dodecanoyl-CoA + H2O = dodecanoate + CoA + H(+). The catalysed reaction is tetradecanoyl-CoA + H2O = tetradecanoate + CoA + H(+). The enzyme catalyses octadecanoyl-CoA + H2O = octadecanoate + CoA + H(+). It carries out the reaction eicosanoyl-CoA + H2O = eicosanoate + CoA + H(+). It catalyses the reaction (9Z)-octadecenoyl-CoA + H2O = (9Z)-octadecenoate + CoA + H(+). The catalysed reaction is (9Z,12Z)-octadecadienoyl-CoA + H2O = (9Z,12Z)-octadecadienoate + CoA + H(+). The enzyme catalyses (5Z,8Z,11Z,14Z)-eicosatetraenoyl-CoA + H2O = (5Z,8Z,11Z,14Z)-eicosatetraenoate + CoA + H(+). It carries out the reaction tetracosanoyl-CoA + H2O = tetracosanoate + CoA + H(+). It catalyses the reaction hexacosanoyl-CoA + H2O = hexacosanoate + CoA + H(+). The catalysed reaction is docosanoyl-CoA + H2O = docosanoate + CoA + H(+). The enzyme catalyses (9Z)-hexadecenoyl-CoA + H2O = (9Z)-hexadecenoate + CoA + H(+). Its pathway is lipid metabolism; fatty acid metabolism. Functionally, catalyzes the hydrolysis of acyl-CoAs into free fatty acids and coenzyme A (CoASH), regulating their respective intracellular levels. Mainly active on long-chain acyl-CoAs. May have a function in termination of beta-oxidation of fatty acids. This Mus musculus (Mouse) protein is Acyl-coenzyme A thioesterase 3 (Acot3).